The following is a 327-amino-acid chain: Undecaprenyl-phosphate 4-deoxy-4-formamido-L-arabinose transferase (327 aa).

Over 1 to 235 (MFDAAPIKKV…TCLTTTPLRL (235 aa)) the chain is Cytoplasmic. The helical transmembrane segment at 236–256 (LSLLGSVIAIGGFSLSVLLIV) threads the bilayer. Residues 257–269 (LRLALGPQWAAEG) lie on the Periplasmic side of the membrane. The helical transmembrane segment at 270–290 (VFMLFAVLFTFIGAQFIGMGL) threads the bilayer. The Cytoplasmic portion of the chain corresponds to 291-327 (LGEYIGRIYNDVRARPRYFVQQVIYPESTSFTEESHQ).

Belongs to the glycosyltransferase 2 family.

Its subcellular location is the cell inner membrane. It carries out the reaction UDP-4-deoxy-4-formamido-beta-L-arabinose + di-trans,octa-cis-undecaprenyl phosphate = 4-deoxy-4-formamido-alpha-L-arabinopyranosyl di-trans,octa-cis-undecaprenyl phosphate + UDP. Its pathway is glycolipid biosynthesis; 4-amino-4-deoxy-alpha-L-arabinose undecaprenyl phosphate biosynthesis; 4-amino-4-deoxy-alpha-L-arabinose undecaprenyl phosphate from UDP-4-deoxy-4-formamido-beta-L-arabinose and undecaprenyl phosphate: step 1/2. It functions in the pathway bacterial outer membrane biogenesis; lipopolysaccharide biosynthesis. Catalyzes the transfer of 4-deoxy-4-formamido-L-arabinose from UDP to undecaprenyl phosphate. The modified arabinose is attached to lipid A and is required for resistance to polymyxin and cationic antimicrobial peptides. This chain is Undecaprenyl-phosphate 4-deoxy-4-formamido-L-arabinose transferase, found in Salmonella paratyphi A (strain ATCC 9150 / SARB42).